The primary structure comprises 176 residues: Ribosome rescue factor SmrB (176 aa).

Positions 93–168 (LDLHGYRQSE…GDAALLVLID (76 aa)) constitute a Smr domain.

It belongs to the SmrB family. In terms of assembly, associates with collided ribosomes, but not with correctly translating polysomes.

Functionally, acts as a ribosome collision sensor. Detects stalled/collided disomes (pairs of ribosomes where the leading ribosome is stalled and a second ribosome has collided with it) and endonucleolytically cleaves mRNA at the 5' boundary of the stalled ribosome. Stalled/collided disomes form a new interface (primarily via the 30S subunits) that binds SmrB. Cleaved mRNA becomes available for tmRNA ligation, leading to ribosomal subunit dissociation and rescue of stalled ribosomes. The sequence is that of Ribosome rescue factor SmrB from Shewanella sp. (strain ANA-3).